The following is a 461-amino-acid chain: MSTGKIVKVIGAVVDVEFDQDSVPRVYDALNIIDGNNSSLVLEVQQQIGSGIVRCIAMGSSDGMRRGLVAVNTGEPITVPVGEETLGRIMNVLGQPIDECGEIGQKTSYPIHREPPSYEDQANSTELLETGVKVIDLICPFAKGGKIGLFGGAGVGKTVNMMELINNIAKAHSGLSVFTGVGERTREGNDFYYEMKEAGVLDKVAMVYGQMNEPPGNRLRVALTGLTIAERFRDEGRDVLLFIDNIYRYTLAGTEVSALLGRMPSAVGYQPTLAEEMGVLQERITSTHKGSITSIQAVYVPADDLTDPSPATTFAHLDATVVLSRNIAALGLYPAIDPLDSTSRQLDPLVVGVEHYDVARGVQTVLQRYKELKDIIAILGMDELSEDDKLTVARARKVERFLTQPYHVAEVFTGQPGIFVSLKDTLNGFKGLLSGEYDDVPEQAFLYCGAIEDVIEKAKTM.

151 to 158 provides a ligand contact to ATP; it reads GGAGVGKT.

Belongs to the ATPase alpha/beta chains family. F-type ATPases have 2 components, CF(1) - the catalytic core - and CF(0) - the membrane proton channel. CF(1) has five subunits: alpha(3), beta(3), gamma(1), delta(1), epsilon(1). CF(0) has three main subunits: a(1), b(2) and c(9-12). The alpha and beta chains form an alternating ring which encloses part of the gamma chain. CF(1) is attached to CF(0) by a central stalk formed by the gamma and epsilon chains, while a peripheral stalk is formed by the delta and b chains.

Its subcellular location is the cell inner membrane. The enzyme catalyses ATP + H2O + 4 H(+)(in) = ADP + phosphate + 5 H(+)(out). Produces ATP from ADP in the presence of a proton gradient across the membrane. The catalytic sites are hosted primarily by the beta subunits. The protein is ATP synthase subunit beta 2 of Photobacterium profundum (strain SS9).